The chain runs to 350 residues: Isopentenyl-diphosphate delta-isomerase (350 aa).

15–16 is a substrate binding site; sequence RK. FMN contacts are provided by residues Ser-73, 74–76, Ser-104, and Asn-132; that span reads SMT. 104-106 is a substrate binding site; that stretch reads SQR. Position 167 (Gln-167) interacts with substrate. Glu-168 is a Mg(2+) binding site. FMN is bound by residues Lys-199, Thr-229, 279–281, and 300–301; these read GLR and AM.

Belongs to the IPP isomerase type 2 family. As to quaternary structure, homooctamer. Dimer of tetramers. The cofactor is FMN. NADPH is required as a cofactor. Requires Mg(2+) as cofactor.

The protein resides in the cytoplasm. It carries out the reaction isopentenyl diphosphate = dimethylallyl diphosphate. Functionally, involved in the biosynthesis of isoprenoids. Catalyzes the 1,3-allylic rearrangement of the homoallylic substrate isopentenyl (IPP) to its allylic isomer, dimethylallyl diphosphate (DMAPP). This chain is Isopentenyl-diphosphate delta-isomerase, found in Nostoc sp. (strain PCC 7120 / SAG 25.82 / UTEX 2576).